We begin with the raw amino-acid sequence, 135 residues long: Large ribosomal subunit protein uL16m (135 aa).

Belongs to the universal ribosomal protein uL16 family.

It is found in the mitochondrion. The sequence is that of Large ribosomal subunit protein uL16m (RPL16) from Prototheca wickerhamii.